Consider the following 647-residue polypeptide: Shugoshin-2 (647 aa).

Ser7 carries the post-translational modification Phosphoserine. 2 coiled-coil regions span residues 28–87 (SKAQ…FHEE) and 125–145 (DEESVVKDTEEIIEQAQHDVS). A disordered region spans residues 171–295 (REANVFSDTQ…DTVIQSTPTK (125 aa)). The segment covering 200–210 (NLSNSKPVNNN) has biased composition (low complexity). At Ser240 the chain carries Phosphoserine. Composition is skewed to polar residues over residues 242 to 253 (KSLSNKINNQAA) and 282 to 293 (RIQSDTVIQSTP). Residue Thr292 is modified to Phosphothreonine. Residues Ser332 and Ser335 each carry the phosphoserine modification. Polar residues-rich tracts occupy residues 375 to 396 (SLTSQENVGPQVTTTSLSNMTV) and 462 to 478 (EPPSSNGFSIAHPNNSP). Disordered regions lie at residues 375–416 (SLTS…DSSV), 453–486 (RNPPMRLSSEPPSSNGFSIAHPNNSPLRPPSLQG), 522–579 (TNLK…ERKK), and 593–647 (RNFD…TLNL). Composition is skewed to basic and acidic residues over residues 528–541 (NENDRVTKTQSRRE) and 593–602 (RNFDLPSDHV). A compositionally biased stretch (polar residues) spans 621–647 (KTETANITSEAPTTSEVTLENSETLNL).

Belongs to the shugoshin family.

It localises to the chromosome. The protein resides in the centromere. In terms of biological role, involved in chromosome cohesion during mitosis and meiosis by preventing premature dissociation of cohesin complex from centromeres after prophase, when most of cohesin complex dissociates from chromosomes arms. Required for faithful mitotic chromosome segregation and proper kinetochore orientation during meiosis I. In contrast to sgo1, it is dispensable for centromeric protection of rec8 during meiosis I as well as protection of rad21 during mitosis. Required to sense the lack of tension at centromeres during mitosis. In Schizosaccharomyces pombe (strain 972 / ATCC 24843) (Fission yeast), this protein is Shugoshin-2 (sgo2).